Consider the following 173-residue polypeptide: SPbeta prophage-derived putative HNH homing endonuclease YosQ (173 aa).

Its function is as follows. A possible homing endonuclease, it is entirely encoded within the YosP intron. This Bacillus subtilis (strain 168) protein is SPbeta prophage-derived putative HNH homing endonuclease YosQ (yosQ).